A 309-amino-acid chain; its full sequence is MQGNKSTIREYKIVVVGGGGVGKSALTIQFIQSYFVDEYDPTIEDSYRKQVVIDDKVSILDILDTAGQEEYSAMREQYMRTGEGFLLVYSVTSRNSFDELLSYYQQIQRVKDSDYIPVVVVGNKLDLENERQVSYEDGLRLAKQLNAPFLETSAKQAINVDEAFYSLIRLVRDDGGKYNSMNRQLDNTNEIRDSELTSSATADREKKNNGSYVLDNSLTNAGTGSSSKSAVNHNGETTKRTDEKNYVNQNNNNEGNTKYSSNGNGNRSDISRGNQNNALNSRSKQSAEPQKNSSANARKESSGGCCIIC.

Residues 20–25 (GVGKSA), 36–42 (VDEYDPT), 66–67 (AG), 123–126 (NKLD), and 153–155 (SAK) contribute to the GTP site. The Effector region motif lies at 39-47 (YDPTIEDSY). Positions 177-303 (KYNSMNRQLD…SANARKESSG (127 aa)) are disordered. Polar residues-rich tracts occupy residues 179–188 (NSMNRQLDNT) and 209–235 (NGSY…NHNG). The span at 236-245 (ETTKRTDEKN) shows a compositional bias: basic and acidic residues. Over residues 246–256 (YVNQNNNNEGN) the composition is skewed to low complexity. Polar residues predominate over residues 257-296 (TKYSSNGNGNRSDISRGNQNNALNSRSKQSAEPQKNSSAN). Cys305 carries the S-palmitoyl cysteine lipid modification. Residue Cys306 is modified to Cysteine methyl ester. Cys306 carries S-farnesyl cysteine lipidation. Positions 307-309 (IIC) are cleaved as a propeptide — removed in mature form.

This sequence belongs to the small GTPase superfamily. Ras family. Farnesylated by RAM1-RAM2, which is required for targeting RAS1 to the cytoplasmic site of the endoplasmic reticulum, where proteolytic processing of the C-terminus by RCE1 and methylation of the resulting carboxyl group by STE14 occurs. In terms of processing, palmitoylated by the ERF2-SHR5 complex, which is required for proper plasma membrane localization of RAS1.

The protein localises to the cell membrane. The catalysed reaction is GTP + H2O = GDP + phosphate + H(+). Its activity is regulated as follows. Alternates between an inactive form bound to GDP and an active form bound to GTP. Activated by guanine nucleotide-exchange factor (GEF) CDC25 and inactivated by GTPase-activating proteins (GAPs) IRA1 and IRA2. The S.cerevisiae Ras proteins modulate the activity of the adenylate cyclase catalytic subunit and therefore affect the biosynthesis of cyclic-AMP. In Saccharomyces cerevisiae (strain ATCC 204508 / S288c) (Baker's yeast), this protein is Ras-like protein 1 (RAS1).